Consider the following 414-residue polypeptide: Putative competence-damage inducible protein (414 aa).

This sequence belongs to the CinA family.

The polypeptide is Putative competence-damage inducible protein (Listeria monocytogenes serovar 1/2a (strain ATCC BAA-679 / EGD-e)).